A 100-amino-acid chain; its full sequence is uncharacterized protein (100 aa).

This is an uncharacterized protein from Saccharomyces cerevisiae (strain ATCC 204508 / S288c) (Baker's yeast).